The primary structure comprises 400 residues: Pyruvate dehydrogenase E1 component subunit beta-4, chloroplastic (400 aa).

The segment at 1–34 (MAAASSLHAAPRVGSSSSFSSSSSAGRRSASAAR) is disordered. Residues 1–57 (MAAASSLHAAPRVGSSSSFSSSSSAGRRSASAARSVRVAAAAGSCAARRAGGRMVAR) constitute a chloroplast transit peptide. The segment covering 9–34 (AAPRVGSSSSFSSSSSAGRRSASAAR) has biased composition (low complexity). Glutamate 136 lines the thiamine diphosphate pocket. K(+)-binding residues include isoleucine 189, alanine 237, isoleucine 238, and asparagine 242.

As to quaternary structure, tetramer of 2 alpha and 2 beta subunits. Thiamine diphosphate serves as cofactor.

It is found in the plastid. Its subcellular location is the chloroplast. The catalysed reaction is N(6)-[(R)-lipoyl]-L-lysyl-[protein] + pyruvate + H(+) = N(6)-[(R)-S(8)-acetyldihydrolipoyl]-L-lysyl-[protein] + CO2. In terms of biological role, the pyruvate dehydrogenase complex catalyzes the overall conversion of pyruvate to acetyl-CoA and CO(2). It contains multiple copies of three enzymatic components: pyruvate dehydrogenase (E1), dihydrolipoamide acetyltransferase (E2) and lipoamide dehydrogenase (E3). The polypeptide is Pyruvate dehydrogenase E1 component subunit beta-4, chloroplastic (Oryza sativa subsp. japonica (Rice)).